The sequence spans 672 residues: Bifunctional polymyxin resistance protein ArnA (672 aa).

The tract at residues 1-310 is formyltransferase ArnAFT; it reads MKAIVFAYHD…EMGMVPQAKL (310 aa). The active-site Proton donor; for formyltransferase activity is H104. (6R)-10-formyltetrahydrofolate-binding positions include R114 and 136 to 140; that span reads VSRAD. A dehydrogenase ArnADH region spans residues 320–672; it reads RRTRVLILGV…HADNVTDTQG (353 aa). Residues D353 and 374 to 375 contribute to the NAD(+) site; that span reads DI. UDP-alpha-D-glucuronate-binding positions include A399, Y404, and 438 to 439; that span reads TS. The active-site Proton acceptor; for decarboxylase activity is E440. UDP-alpha-D-glucuronate-binding positions include R466, N498, 532-541, and Y619; that span reads KLVDGGAQKR. R625 functions as the Proton donor; for decarboxylase activity in the catalytic mechanism.

This sequence in the N-terminal section; belongs to the Fmt family. UDP-L-Ara4N formyltransferase subfamily. In the C-terminal section; belongs to the NAD(P)-dependent epimerase/dehydratase family. UDP-glucuronic acid decarboxylase subfamily. In terms of assembly, homohexamer, formed by a dimer of trimers.

The catalysed reaction is UDP-alpha-D-glucuronate + NAD(+) = UDP-beta-L-threo-pentopyranos-4-ulose + CO2 + NADH. The enzyme catalyses UDP-4-amino-4-deoxy-beta-L-arabinose + (6R)-10-formyltetrahydrofolate = UDP-4-deoxy-4-formamido-beta-L-arabinose + (6S)-5,6,7,8-tetrahydrofolate + H(+). It functions in the pathway nucleotide-sugar biosynthesis; UDP-4-deoxy-4-formamido-beta-L-arabinose biosynthesis; UDP-4-deoxy-4-formamido-beta-L-arabinose from UDP-alpha-D-glucuronate: step 1/3. The protein operates within nucleotide-sugar biosynthesis; UDP-4-deoxy-4-formamido-beta-L-arabinose biosynthesis; UDP-4-deoxy-4-formamido-beta-L-arabinose from UDP-alpha-D-glucuronate: step 3/3. It participates in bacterial outer membrane biogenesis; lipopolysaccharide biosynthesis. Bifunctional enzyme that catalyzes the oxidative decarboxylation of UDP-glucuronic acid (UDP-GlcUA) to UDP-4-keto-arabinose (UDP-Ara4O) and the addition of a formyl group to UDP-4-amino-4-deoxy-L-arabinose (UDP-L-Ara4N) to form UDP-L-4-formamido-arabinose (UDP-L-Ara4FN). The modified arabinose is attached to lipid A and is required for resistance to polymyxin and cationic antimicrobial peptides. The protein is Bifunctional polymyxin resistance protein ArnA of Pectobacterium carotovorum subsp. carotovorum (strain PC1).